Consider the following 257-residue polypeptide: Ribosomal RNA small subunit methyltransferase A (257 aa).

S-adenosyl-L-methionine-binding residues include N12, L14, G39, E60, D85, and N105.

Belongs to the class I-like SAM-binding methyltransferase superfamily. rRNA adenine N(6)-methyltransferase family. RsmA subfamily.

It is found in the cytoplasm. The catalysed reaction is adenosine(1518)/adenosine(1519) in 16S rRNA + 4 S-adenosyl-L-methionine = N(6)-dimethyladenosine(1518)/N(6)-dimethyladenosine(1519) in 16S rRNA + 4 S-adenosyl-L-homocysteine + 4 H(+). Its function is as follows. Specifically dimethylates two adjacent adenosines (A1518 and A1519) in the loop of a conserved hairpin near the 3'-end of 16S rRNA in the 30S particle. May play a critical role in biogenesis of 30S subunits. The sequence is that of Ribosomal RNA small subunit methyltransferase A from Methylococcus capsulatus (strain ATCC 33009 / NCIMB 11132 / Bath).